The sequence spans 423 residues: G protein-activated inward rectifier potassium channel 2 (423 aa).

Residues 1–89 (MAKLTESMTN…IFTTLVDLKW (89 aa)) are Cytoplasmic-facing. Phosphoserine occurs at positions 16 and 23. The helical transmembrane segment at 90–114 (RFNLLIFVMVYTVTWLFFGMIWWLI) threads the bilayer. Over 115 to 138 (AYIRGDMDHIEDPSWTPCVTNLNG) the chain is Extracellular. Residues 139–150 (FVSAFLFSIETE) constitute an intramembrane region (helical; Pore-forming). The pore-forming intramembrane region spans 151-157 (TTIGYGY). Residues 152-157 (TIGYGY) carry the Selectivity filter motif. At 158 to 166 (RVITDKCPE) the chain is on the extracellular side. Residues 167–188 (GIILLLIQSVLGSIVNAFMVGC) form a helical membrane-spanning segment. The Cytoplasmic segment spans residues 189-423 (MFVKISQPKK…VANLENESKV (235 aa)). The disordered stretch occupies residues 390–423 (NQHAELETEEEEKNLEEQTERNGDVANLENESKV). The short motif at 420–423 (ESKV) is the PDZ-binding element.

It belongs to the inward rectifier-type potassium channel (TC 1.A.2.1) family. KCNJ6 subfamily. As to quaternary structure, associates with KCNJ3/GIRK1 or KCNJ5/GRIK4 to form a G-protein-activated heteromultimer pore-forming unit. The resulting inward current is much larger. Interacts (via PDZ-binding motif) with SNX27 (via PDZ domain); the interaction is required when endocytosed to prevent degradation in lysosomes and promote recycling to the plasma membrane. Most abundant in cerebellum, and to a lesser degree in islets and exocrine pancreas.

The protein localises to the membrane. It carries out the reaction K(+)(in) = K(+)(out). Activated by phosphatidylinositol 4,5 biphosphate (PtdIns(4,5)P2). Functionally, inward rectifier potassium channels are characterized by a greater tendency to allow potassium to flow into the cell rather than out of it. Their voltage dependence is regulated by the concentration of extracellular potassium; as external potassium is raised, the voltage range of the channel opening shifts to more positive voltages. The inward rectification is mainly due to the blockage of outward current by internal magnesium. This potassium channel may be involved in the regulation of insulin secretion by glucose and/or neurotransmitters acting through G-protein-coupled receptors. In Homo sapiens (Human), this protein is G protein-activated inward rectifier potassium channel 2 (KCNJ6).